A 348-amino-acid polypeptide reads, in one-letter code: Isopentenyl-diphosphate delta-isomerase (348 aa).

11–12 (RK) contributes to the substrate binding site. Residues 70–72 (AMT), Ser-100, and Asn-131 each bind FMN. Residue 100 to 102 (SQR) coordinates substrate. Residue Gln-165 coordinates substrate. Glu-166 contacts Mg(2+). Residues Lys-197, Thr-231, 278–280 (GIR), and 299–300 (AR) each bind FMN.

It belongs to the IPP isomerase type 2 family. Homooctamer. Dimer of tetramers. FMN is required as a cofactor. Requires NADPH as cofactor. Mg(2+) serves as cofactor.

Its subcellular location is the cytoplasm. The enzyme catalyses isopentenyl diphosphate = dimethylallyl diphosphate. Functionally, involved in the biosynthesis of isoprenoids. Catalyzes the 1,3-allylic rearrangement of the homoallylic substrate isopentenyl (IPP) to its allylic isomer, dimethylallyl diphosphate (DMAPP). This is Isopentenyl-diphosphate delta-isomerase from Mycobacterium marinum (strain ATCC BAA-535 / M).